The sequence spans 829 residues: Periplasmic nitrate reductase (829 aa).

Residues 1–36 constitute a signal peptide (tat-type signal); that stretch reads MARRDFIKQTAAAAAATVAGVPLTGYTQNIVTESEA. The region spanning 39–95 is the 4Fe-4S Mo/W bis-MGD-type domain; sequence LKWSKAPCRFCGTGCGVNVAVKDNQVVATHGDFNAEVNKGLNCVKGYFLSKIMYGSD. [4Fe-4S] cluster-binding residues include Cys46, Cys49, Cys53, and Cys81. Residues Lys83, Gln150, Asn175, Cys179, 212-219, 243-247, 262-264, Met373, Gln377, Asn483, 509-510, Lys532, Asp559, and 719-728 contribute to the Mo-bis(molybdopterin guanine dinucleotide) site; these read WGSNMAEM, STFEH, QSD, SD, and TGRVLEHWHS. Trp795 provides a ligand contact to substrate. Mo-bis(molybdopterin guanine dinucleotide) is bound by residues Asn803 and Lys820.

It belongs to the prokaryotic molybdopterin-containing oxidoreductase family. NasA/NapA/NarB subfamily. Component of the periplasmic nitrate reductase NapAB complex composed of NapA and NapB. It depends on [4Fe-4S] cluster as a cofactor. Mo-bis(molybdopterin guanine dinucleotide) is required as a cofactor. Predicted to be exported by the Tat system. The position of the signal peptide cleavage has not been experimentally proven.

The protein resides in the periplasm. The catalysed reaction is 2 Fe(II)-[cytochrome] + nitrate + 2 H(+) = 2 Fe(III)-[cytochrome] + nitrite + H2O. In terms of biological role, catalytic subunit of the periplasmic nitrate reductase complex NapAB. Receives electrons from NapB and catalyzes the reduction of nitrate to nitrite. This Bordetella bronchiseptica (strain ATCC BAA-588 / NCTC 13252 / RB50) (Alcaligenes bronchisepticus) protein is Periplasmic nitrate reductase.